Consider the following 115-residue polypeptide: Galanin-like peptide (115 aa).

The signal sequence occupies residues 1 to 23 (MAPSVPLVLLLVLLLSLAETPAS). The propeptide occupies 86-115 (NVMEAFAKPEIGDLDVLSKKIPKEEDVLKS).

Belongs to the galanin family. As to expression, hypothalamus and pituitary gland.

The protein localises to the secreted. Its function is as follows. Hypothalamic neuropeptide which binds to the G-protein-coupled galanin receptors (GALR1, GALR2 and GALR3). Involved in a large number of putative physiological functions in CNS homeostatic processes, including the regulation of gonadotropin-releasing hormone secretion. Functionally, exhibits potent and dose-dependent vasoconstrictor and anti-edema activity in the cutaneous microvasculature, a physiologic effects which does not appear to be mediated via GALR1 or GALR2. Exhibits antimicrobial activity against Gram-negative bacterias, inducing bacterial membrane blebbing. In Macaca nemestrina (Pig-tailed macaque), this protein is Galanin-like peptide (GALP).